Consider the following 739-residue polypeptide: Probable beta-glucosidase L (739 aa).

The first 17 residues, 1-17 (MQTLFLSLLAAAVTVHA), serve as a signal peptide directing secretion. Asn40 and Asn224 each carry an N-linked (GlcNAc...) asparagine glycan. The active site involves Asp252. N-linked (GlcNAc...) asparagine glycosylation is present at Asn398.

This sequence belongs to the glycosyl hydrolase 3 family.

The protein localises to the secreted. The enzyme catalyses Hydrolysis of terminal, non-reducing beta-D-glucosyl residues with release of beta-D-glucose.. The protein operates within glycan metabolism; cellulose degradation. Beta-glucosidases are one of a number of cellulolytic enzymes involved in the degradation of cellulosic biomass. Catalyzes the last step releasing glucose from the inhibitory cellobiose. The protein is Probable beta-glucosidase L (bglL) of Aspergillus fumigatus (strain CBS 144.89 / FGSC A1163 / CEA10) (Neosartorya fumigata).